The primary structure comprises 176 residues: Peptide deformylase (176 aa).

2 residues coordinate Fe cation: cysteine 100 and histidine 142. Glutamate 143 is an active-site residue. Fe cation is bound at residue histidine 146.

This sequence belongs to the polypeptide deformylase family. It depends on Fe(2+) as a cofactor.

It carries out the reaction N-terminal N-formyl-L-methionyl-[peptide] + H2O = N-terminal L-methionyl-[peptide] + formate. Its function is as follows. Removes the formyl group from the N-terminal Met of newly synthesized proteins. Requires at least a dipeptide for an efficient rate of reaction. N-terminal L-methionine is a prerequisite for activity but the enzyme has broad specificity at other positions. The chain is Peptide deformylase from Elusimicrobium minutum (strain Pei191).